The following is a 524-amino-acid chain: Ribonuclease Y (524 aa).

Residues 3-23 (IVINLFLLVPASIVFFAAGFF) form a helical membrane-spanning segment. The tract at residues 96–127 (QQREGQLKKQAQDNRDMERRLQDQRKENEQVQ) is disordered. Residues 100–124 (GQLKKQAQDNRDMERRLQDQRKENE) are compositionally biased toward basic and acidic residues. Residues 214–280 (ALSVVHIQTD…KLTLQKLLSE (67 aa)) enclose the KH domain. The region spanning 340 to 432 (LLQHSREVAM…VDAANVISLS (93 aa)) is the HD domain.

It belongs to the RNase Y family.

It localises to the cell membrane. Its function is as follows. Endoribonuclease that initiates mRNA decay. The sequence is that of Ribonuclease Y from Chlorobium phaeovibrioides (strain DSM 265 / 1930) (Prosthecochloris vibrioformis (strain DSM 265)).